The sequence spans 384 residues: Probable L-tyrosine/L-aspartate decarboxylase (384 aa).

Lys-233 bears the N6-(pyridoxal phosphate)lysine mark.

This sequence belongs to the group II decarboxylase family. MfnA subfamily. Requires pyridoxal 5'-phosphate as cofactor.

The catalysed reaction is L-tyrosine + H(+) = tyramine + CO2. The enzyme catalyses L-aspartate + H(+) = beta-alanine + CO2. Its pathway is cofactor biosynthesis; methanofuran biosynthesis. The protein operates within cofactor biosynthesis; coenzyme A biosynthesis. In terms of biological role, catalyzes the decarboxylation of L-tyrosine to produce tyramine for methanofuran biosynthesis. Can also catalyze the decarboxylation of L-aspartate to produce beta-alanine for coenzyme A (CoA) biosynthesis. The polypeptide is Probable L-tyrosine/L-aspartate decarboxylase (Methanococcus maripaludis (strain C5 / ATCC BAA-1333)).